The primary structure comprises 728 residues: Beta-galactosidase 12 (728 aa).

The signal sequence occupies residues 1–27 (MGLNFREKAWILLGILCCSSLICSVKA). Glu-185 functions as the Proton donor in the catalytic mechanism. Glu-254 serves as the catalytic Nucleophile. N-linked (GlcNAc...) asparagine glycosylation is found at Asn-255, Asn-380, and Asn-450.

This sequence belongs to the glycosyl hydrolase 35 family. In terms of tissue distribution, ubiquitous, with higher expression levels in roots and siliques.

It localises to the secreted. It is found in the extracellular space. Its subcellular location is the apoplast. It carries out the reaction Hydrolysis of terminal non-reducing beta-D-galactose residues in beta-D-galactosides.. The protein is Beta-galactosidase 12 (BGAL12) of Arabidopsis thaliana (Mouse-ear cress).